Reading from the N-terminus, the 88-residue chain is Thioredoxin-2 (88 aa).

In terms of domain architecture, Thioredoxin spans 2 to 88 (SRVIHISSNE…YRNGAKVSEF (87 aa)). Residues Cys31 and Cys34 each act as nucleophile in the active site. Cys31 and Cys34 are disulfide-bonded.

This sequence belongs to the thioredoxin family.

In terms of biological role, participates in various redox reactions through the reversible oxidation of its active center dithiol to a disulfide and catalyzes dithiol-disulfide exchange reactions. The protein is Thioredoxin-2 (trxB) of Dictyostelium discoideum (Social amoeba).